Consider the following 430-residue polypeptide: Histidinol dehydrogenase (430 aa).

NAD(+)-binding residues include Tyr130, Gln191, and Asn214. Positions 237, 259, and 262 each coordinate substrate. Residues Gln259 and His262 each coordinate Zn(2+). Residues Glu327 and His328 each act as proton acceptor in the active site. 4 residues coordinate substrate: His328, Asp361, Glu415, and His420. Residue Asp361 participates in Zn(2+) binding. His420 is a binding site for Zn(2+).

It belongs to the histidinol dehydrogenase family. The cofactor is Zn(2+).

The enzyme catalyses L-histidinol + 2 NAD(+) + H2O = L-histidine + 2 NADH + 3 H(+). The protein operates within amino-acid biosynthesis; L-histidine biosynthesis; L-histidine from 5-phospho-alpha-D-ribose 1-diphosphate: step 9/9. In terms of biological role, catalyzes the sequential NAD-dependent oxidations of L-histidinol to L-histidinaldehyde and then to L-histidine. The protein is Histidinol dehydrogenase of Brucella melitensis biotype 1 (strain ATCC 23456 / CCUG 17765 / NCTC 10094 / 16M).